The primary structure comprises 387 residues: MSRTNLPIQPAKMSDATSSKPQIFSIQDLKQAASDKMSQMYRDYYNGGAMDNITLASNEAAFDRYLLRPRVLRNVSNIDMTTTLWGTKAALPLGVSPSAMHRLAHADGEVGTSKACAARNVPMILSALSNDTLEDVSGQSSDGSTPYAIQVSPFKNRQITTNLLSRAKAAGYKAVVLTVDAPMFGRRLDDLRNGFSIPPGFSFPNLSAQTQSGSGGLGGGIPDLSFDTAATWEEKIAWMKSQTDLEIWVKGVTSPLDAQIAIEQGVDGIIISNHGGRQLDTTPATIDILREIAPIAKGKTRIAIDGGFRRGSDIFKAVALGADFVFVGRIAIWGLAYDGSNGVGLALDLLINEFKLCMGLAGCSKISDITPAHLSILNAKGVLESVY.

The interval 1 to 20 (MSRTNLPIQPAKMSDATSSK) is disordered. Residues 18–379 (SSKPQIFSIQ…TPAHLSILNA (362 aa)) enclose the FMN hydroxy acid dehydrogenase domain. Residue tyrosine 44 participates in a 2-oxocarboxylate binding. Residues serine 126, glutamine 150, and threonine 178 each coordinate FMN. Arginine 187 provides a ligand contact to a 2-oxocarboxylate. Residue lysine 250 coordinates FMN. Histidine 274 acts as the Proton acceptor in catalysis. Arginine 277 is a binding site for a 2-oxocarboxylate. FMN is bound by residues 305–309 (DGGFR) and 328–329 (GR).

The protein belongs to the FMN-dependent alpha-hydroxy acid dehydrogenase family. The cofactor is FMN.

It participates in mycotoxin biosynthesis. Functionally, oxidase; part of the gene cluster that mediates the biosynthesis of fusaric acid, a mycotoxin with low to moderate toxicity to animals and humans, but with high phytotoxic properties. L-aspartate is suggested as fusaric acid amino acid precursor that is activated and further processed to O-acetyl-L-homoserine by cluster enzymes aspartate kinase FUB3 and homoserine O-acetyltransferase FUB5, as well as enzymes of the primary metabolism. The polyketide synthase (PKS) FUB1 generates the triketide trans-2-hexenal which is presumptively released by the hydrolase FUB4 and linked to the NRPS-bound amino acid precursor by NAD(P)-dependent dehydrogenase FUB6. FUB1, FUB4, and the non-canonical NRPS Fub8 may form an enzyme complex. Further processing of the NRPS-bound intermediate might be carried out by FUB6 and the sulfhydrylase FUB7, enabling a spontaneous electrocyclization to close the carbon backbone of fusaric acid. Dihydrofusaric acid is likely to be released via reduction by the thioester reductase (TR) domain of FUB8 whereupon the final oxidation to fusaric acid may (also) be performed by the FMN-dependent dehydrogenase FUB9. This chain is Oxidase FUB9, found in Fusarium oxysporum f. sp. lycopersici (strain 4287 / CBS 123668 / FGSC 9935 / NRRL 34936) (Fusarium vascular wilt of tomato).